A 196-amino-acid chain; its full sequence is Pyridoxal 5'-phosphate synthase subunit PdxT (196 aa).

47–49 (GES) contributes to the L-glutamine binding site. Cysteine 79 acts as the Nucleophile in catalysis. Residues arginine 106 and 134–135 (IR) each bind L-glutamine. Residues histidine 170 and glutamate 172 each act as charge relay system in the active site.

The protein belongs to the glutaminase PdxT/SNO family. As to quaternary structure, in the presence of PdxS, forms a dodecamer of heterodimers. Only shows activity in the heterodimer.

The catalysed reaction is aldehydo-D-ribose 5-phosphate + D-glyceraldehyde 3-phosphate + L-glutamine = pyridoxal 5'-phosphate + L-glutamate + phosphate + 3 H2O + H(+). It catalyses the reaction L-glutamine + H2O = L-glutamate + NH4(+). It functions in the pathway cofactor biosynthesis; pyridoxal 5'-phosphate biosynthesis. In terms of biological role, catalyzes the hydrolysis of glutamine to glutamate and ammonia as part of the biosynthesis of pyridoxal 5'-phosphate. The resulting ammonia molecule is channeled to the active site of PdxS. This is Pyridoxal 5'-phosphate synthase subunit PdxT from Bacillus cereus (strain ZK / E33L).